We begin with the raw amino-acid sequence, 355 residues long: Olfactory receptor 1I1 (355 aa).

The Extracellular portion of the chain corresponds to 1–25 (MEPEKQTEISEFFLQGLSEKPEHQT). Residues 26 to 49 (LLFTMFLSTYLVTIIGNALIILAI) form a helical membrane-spanning segment. Residues 50-57 (ITDSHLHT) lie on the Cytoplasmic side of the membrane. The helical transmembrane segment at 58-79 (PMYFFLFNLSLVDTLLSSTTVP) threads the bilayer. Residues 80–100 (KMLANIQAQSRAIPFVGCLTQ) lie on the Extracellular side of the membrane. A helical membrane pass occupies residues 101-120 (MYAFHLFGTMDSFLLAVMAI). The Cytoplasmic segment spans residues 121 to 139 (DRFVAIVHPQRYLVLMCSP). Residues 140 to 158 (VCGLLLGASWMITNLQSLI) form a helical membrane-spanning segment. At 159–195 (HTCLMAQLTFCAGSEISHFFCDLMPLLKLSGSDTHTN) the chain is on the extracellular side. Residues 196 to 219 (ELVIFAFGIVVGTSPFSCILLSYI) form a helical membrane-spanning segment. The Cytoplasmic segment spans residues 220–236 (RIFWTVFKIPSTRGKWK). A helical membrane pass occupies residues 237-259 (AFSTCGLHLTVVSLSYGTIFAVY). Residues 260–272 (LQPTSPSSSQKDK) lie on the Extracellular side of the membrane. A helical membrane pass occupies residues 273 to 292 (AAALMCGVFIPMLNPFIYSI). At 293-355 (RNKDMKAALG…QSLAGNRDME (63 aa)) the chain is on the cytoplasmic side.

Belongs to the G-protein coupled receptor 1 family.

The protein resides in the cell membrane. Its function is as follows. Odorant receptor. This is Olfactory receptor 1I1 (OR1I1) from Homo sapiens (Human).